The following is a 153-amino-acid chain: NADH dehydrogenase [ubiquinone] 1 beta subcomplex subunit 11, mitochondrial (153 aa).

Residues 1-29 (MAAGLFGLSARRLLAAAATRGLPAARVRW) constitute a mitochondrion transit peptide. Positions 40 to 76 (PSAVAGKRPPEPTTPWQEDPEPEDENLYEKNPDSHGY) are disordered. Residues 66-76 (LYEKNPDSHGY) are compositionally biased toward basic and acidic residues. Residues 89–109 (LVFFFGVSIILVLGSTFVAYL) traverse the membrane as a helical segment.

The protein belongs to the complex I NDUFB11 subunit family. As to quaternary structure, complex I is composed of 45 different subunits. Interacts with BCAP31. Ubiquitous.

It is found in the mitochondrion inner membrane. Functionally, accessory subunit of the mitochondrial membrane respiratory chain NADH dehydrogenase (Complex I), that is believed not to be involved in catalysis. Complex I functions in the transfer of electrons from NADH to the respiratory chain. The immediate electron acceptor for the enzyme is believed to be ubiquinone. In Homo sapiens (Human), this protein is NADH dehydrogenase [ubiquinone] 1 beta subcomplex subunit 11, mitochondrial (NDUFB11).